The primary structure comprises 405 residues: Multifunctional CCA protein (405 aa).

Positions 8 and 11 each coordinate ATP. Residues Gly-8 and Arg-11 each coordinate CTP. The Mg(2+) site is built by Asp-21 and Asp-23. Residues Arg-91, Arg-137, and Arg-140 each coordinate ATP. 3 residues coordinate CTP: Arg-91, Arg-137, and Arg-140. The HD domain maps to 228–329; that stretch reads TGIHSMMVLE…NDFLDKCDVW (102 aa).

Belongs to the tRNA nucleotidyltransferase/poly(A) polymerase family. Bacterial CCA-adding enzyme type 1 subfamily. As to quaternary structure, monomer. Can also form homodimers and oligomers. Mg(2+) is required as a cofactor. The cofactor is Ni(2+).

It carries out the reaction a tRNA precursor + 2 CTP + ATP = a tRNA with a 3' CCA end + 3 diphosphate. It catalyses the reaction a tRNA with a 3' CCA end + 2 CTP + ATP = a tRNA with a 3' CCACCA end + 3 diphosphate. Functionally, catalyzes the addition and repair of the essential 3'-terminal CCA sequence in tRNAs without using a nucleic acid template. Adds these three nucleotides in the order of C, C, and A to the tRNA nucleotide-73, using CTP and ATP as substrates and producing inorganic pyrophosphate. tRNA 3'-terminal CCA addition is required both for tRNA processing and repair. Also involved in tRNA surveillance by mediating tandem CCA addition to generate a CCACCA at the 3' terminus of unstable tRNAs. While stable tRNAs receive only 3'-terminal CCA, unstable tRNAs are marked with CCACCA and rapidly degraded. The polypeptide is Multifunctional CCA protein (Pseudoalteromonas atlantica (strain T6c / ATCC BAA-1087)).